The primary structure comprises 255 residues: 3-deoxy-manno-octulosonate cytidylyltransferase (255 aa).

Belongs to the KdsB family.

It localises to the cytoplasm. It catalyses the reaction 3-deoxy-alpha-D-manno-oct-2-ulosonate + CTP = CMP-3-deoxy-beta-D-manno-octulosonate + diphosphate. It functions in the pathway nucleotide-sugar biosynthesis; CMP-3-deoxy-D-manno-octulosonate biosynthesis; CMP-3-deoxy-D-manno-octulosonate from 3-deoxy-D-manno-octulosonate and CTP: step 1/1. Its pathway is bacterial outer membrane biogenesis; lipopolysaccharide biosynthesis. Its function is as follows. Activates KDO (a required 8-carbon sugar) for incorporation into bacterial lipopolysaccharide in Gram-negative bacteria. The protein is 3-deoxy-manno-octulosonate cytidylyltransferase of Glaesserella parasuis serovar 5 (strain SH0165) (Haemophilus parasuis).